The sequence spans 147 residues: Hemoglobin subunit epsilon (147 aa).

The 145-residue stretch at 3-147 (HFTAEEKAAV…VAIALAHKYH (145 aa)) folds into the Globin domain. Phosphoserine is present on residues serine 14 and serine 51. Heme b-binding residues include histidine 64 and histidine 93.

It belongs to the globin family. Heterotetramer of two alpha chains and two epsilon chains in early embryonic hemoglobin Gower-2; two zeta chains and two epsilon chains in early embryonic hemoglobin Gower-1. In terms of tissue distribution, red blood cells.

In terms of biological role, the epsilon chain is a beta-type chain of early mammalian embryonic hemoglobin. The polypeptide is Hemoglobin subunit epsilon (HBE1) (Pan troglodytes (Chimpanzee)).